A 360-amino-acid chain; its full sequence is UDP-arabinopyranose mutase 2 (360 aa).

Residue V2 is modified to N-acetylvaline. A DXD motif motif is present at residues 110-112; the sequence is DDD. An N-linked (Glc...) arginine glycan is attached at R158.

It belongs to the RGP family. Heteromers with RGP1, RGP4 and RGP5. Mn(2+) is required as a cofactor. The cofactor is Mg(2+). Reversibly glycosylated in vitro by UDP-glucose, UDP-xylose and UDP-galactose, but not UDP-mannose. As to expression, predominantly expressed in shoot and root apical meristems. Expressed in epidermal cells of leaves, inflorescence stems and seed coat. Expressed in pollen.

The protein localises to the cytoplasm. The protein resides in the cytosol. It localises to the golgi apparatus. The enzyme catalyses UDP-beta-L-arabinofuranose = UDP-beta-L-arabinopyranose. In terms of biological role, UDP-L-arabinose mutase involved in the biosynthesis of cell wall non-cellulosic polysaccharides. Catalyzes the interconvertion of UDP-L-arabinopyranose (UDP-Arap) and UDP-L-arabinofuranose (UDP-Araf) in vitro. Preferentially catalyzes the formation of UDP-Arap from UDP-Araf. At thermodynamic equilibrium in vitro the ratio of the pyranose form over the furanose form is 95:5. Is not active on other UDP-sugars (UDP-Gal, UDP-Xyl, UDP-Glc, GDP-Man and GDP-Fuc). Functions redundantly with RGP2 and is essential for proper cell walls and pollen development. Probably involved in the formation of the pectocellulosic cell wall layer intine. Is probably active as heteromer in vivo. This Arabidopsis thaliana (Mouse-ear cress) protein is UDP-arabinopyranose mutase 2.